A 274-amino-acid polypeptide reads, in one-letter code: Eukaryotic translation initiation factor 3 subunit G (274 aa).

Phosphoserine occurs at positions 146, 164, and 171. The tract at residues 149–170 (ANTSAAATPEPDTDASGKYVPP) is disordered. Positions 191–270 (TTLKISQLNT…LILHLEWPKK (80 aa)) constitute an RRM domain.

The protein belongs to the eIF-3 subunit G family. Component of the eukaryotic translation initiation factor 3 (eIF-3) complex.

It is found in the cytoplasm. Functionally, RNA-binding component of the eukaryotic translation initiation factor 3 (eIF-3) complex, which is involved in protein synthesis of a specialized repertoire of mRNAs and, together with other initiation factors, stimulates binding of mRNA and methionyl-tRNAi to the 40S ribosome. The eIF-3 complex specifically targets and initiates translation of a subset of mRNAs involved in cell proliferation. This subunit can bind 18S rRNA. The sequence is that of Eukaryotic translation initiation factor 3 subunit G from Meyerozyma guilliermondii (strain ATCC 6260 / CBS 566 / DSM 6381 / JCM 1539 / NBRC 10279 / NRRL Y-324) (Yeast).